A 212-amino-acid chain; its full sequence is Adenylate kinase (212 aa).

Residue 10-15 (GAGKGT) coordinates ATP. Residues 30–59 (AIGDIFRTIIKTSTSEAELINNYVRQGELI) are NMP. AMP-binding positions include R36, 57–59 (ELI), 85–88 (GYPR), and Q92. The LID stretch occupies residues 122–160 (GRYSCKNCGKIYNRYFLQPKTDNVCDVCGSSTFDYRKDD). R123 lines the ATP pocket. Residues C126 and C129 each coordinate Zn(2+). Residue 132-133 (IY) participates in ATP binding. Residues C146 and C149 each contribute to the Zn(2+) site. AMP-binding residues include R157 and R168. K196 lines the ATP pocket.

This sequence belongs to the adenylate kinase family. In terms of assembly, monomer.

It localises to the cytoplasm. It carries out the reaction AMP + ATP = 2 ADP. It functions in the pathway purine metabolism; AMP biosynthesis via salvage pathway; AMP from ADP: step 1/1. In terms of biological role, catalyzes the reversible transfer of the terminal phosphate group between ATP and AMP. Plays an important role in cellular energy homeostasis and in adenine nucleotide metabolism. The chain is Adenylate kinase from Rickettsia peacockii (strain Rustic).